A 102-amino-acid chain; its full sequence is MSSTKASGSVKNSAASAPGGPKSQIRRRAAVEKNTKESNSGPAGARAAGAPGSTPTLLKLYTDEASGFKVDPVVVMVLSVGFIASVFLLHIVARILKKFASE.

A compositionally biased stretch (polar residues) spans 1-15 (MSSTKASGSVKNSAA). The tract at residues 1-53 (MSSTKASGSVKNSAASAPGGPKSQIRRRAAVEKNTKESNSGPAGARAAGAPGS) is disordered. The Cytoplasmic portion of the chain corresponds to 1-72 (MSSTKASGSV…DEASGFKVDP (72 aa)). The span at 41–52 (GPAGARAAGAPG) shows a compositional bias: low complexity. Residues 73 to 93 (VVVMVLSVGFIASVFLLHIVA) form a helical membrane-spanning segment.

Belongs to the SEC61-beta family. In terms of assembly, heterotrimeric complex composed of SEC61, SBH1 and SSS1.

It localises to the endoplasmic reticulum membrane. Functionally, necessary for protein translocation in the endoplasmic reticulum. The protein is Protein transport protein sec61 subunit beta (sbh1) of Schizosaccharomyces pombe (strain 972 / ATCC 24843) (Fission yeast).